Consider the following 488-residue polypeptide: Transcriptional coactivator YAP1 (488 aa).

Residues 1–21 (MEPAQQPPPQPAPQGPAPPSV) are compositionally biased toward pro residues. Positions 1 to 47 (MEPAQQPPPQPAPQGPAPPSVSPAGTPAAPPAPPAGHQVVHVRGDSE) are disordered. At Ser-46 the chain carries Phosphoserine. Thr-48 bears the Phosphothreonine mark. Residues 71 to 85 (MRLRKLPDSFFKPPE) adopt a coiled-coil conformation. Position 75 is an N6-lactoyllysine (Lys-75). Residues 76–99 (LPDSFFKPPEPKSHSRQASTDAGT) form a disordered region. 2 positions are modified to phosphoserine: Ser-90 and Ser-94. Thr-95 carries the phosphothreonine modification. A Phosphothreonine; by MAPK8 and MAPK9 modification is found at Thr-104. Phosphoserine is present on residues Ser-112, Ser-113, Ser-116, and Ser-123. The residue at position 149 (Ser-149) is a Phosphoserine; by LATS1 and LATS2. 2 WW domains span residues 156–189 (VPLP…DPRK) and 215–248 (GPLP…DPRL). Disordered regions lie at residues 261-293 (SAPV…QIQL) and 339-393 (TLEQ…SSYS). Ser-274 is modified (phosphoserine). The interval 276–488 (QGGVLGGGSS…LDKESFLTWL (213 aa)) is transactivation domain. Residues 283-344 (GSSNQQQQIQ…SQLPTLEQDG (62 aa)) adopt a coiled-coil conformation. Residues 348–376 (NAVSSPGMSQELRTMTTNSSDPFLNSGTY) show a composition bias toward polar residues. Position 352 is a phosphoserine; by MAPK8 and MAPK9 (Ser-352). Ser-356, Ser-366, Ser-367, and Ser-373 each carry phosphoserine. Ser-382 carries the post-translational modification Phosphoserine; by LATS1 and LATS2. A compositionally biased stretch (polar residues) spans 384–393 (DSGLSMSSYS). A phosphoserine; by CK1 mark is found at Ser-385 and Ser-388. The residue at position 392 (Tyr-392) is a Phosphotyrosine; by ABL1. Thr-397 is subject to Phosphothreonine; by MAPK8 and MAPK9.

It belongs to the YAP1 family. As to quaternary structure, part of a complex when phosphorylated that contains DSG3, PKP1, YAP1 and YWHAG; the complex is required for localization of DSG3 and YAP1 to the cell membrane in keratinocytes. Binds to the SH3 domain of the YES kinase. Binds to WBP1 and WBP2. Binds, in vitro, through the WW1 domain, to neural isoforms of ENAH that contain the PPSY motif. The phosphorylated form interacts with YWHAB. Interacts (via WW domains) with LATS1 (via PPxY motif 2). Interacts with LATS2. Interacts (via WW domain 1) with isoform JM-A of ERBB4 (via PPxY motif 2). Interacts with TEAD1, TEAD2 and TEAD3. Interacts with TP73 and HCK. Interacts with RUNX1. Interacts with TEAD4. Interacts (via WW domains) with PTPN14 (via PPxY motif 2); this interaction leads to the cytoplasmic sequestration of YAP1 and inhibits its transcriptional coactivator activity. Interacts (when phosphorylated at Ser-112) with SMAD2, SMAD3 and WWTR1. Interacts with PRRG2 (via cytoplasmic domain). Interacts (via WW domains) with PRRG4 (via cytoplasmic domain). Interacts (phosphorylated) with CLDN18; the interaction sequesters YAP1 away from the nucleus and thereby restricts transcription of YAP1 target genes. Interacts with SMAD1. Interacts with AMOT; the interaction facilitates translocation of YAP1 to the cytoplasm and tight junctions. Interacts with AMOTL2, the interaction is required for ubiquitination of AMOTL2 and localization of YAP1 to tight junctions. Post-translationally, phosphorylated by LATS1 and LATS2; leading to cytoplasmic translocation and inactivation. Phosphorylated by ABL1; leading to YAP1 stabilization, enhanced interaction with TP73 and recruitment onto proapoptotic genes; in response to DNA damage. Phosphorylation at Ser-385 and Ser-388 by CK1 is triggered by previous phosphorylation at Ser-382 by LATS proteins and leads to YAP1 ubiquitination by SCF(beta-TRCP) E3 ubiquitin ligase and subsequent degradation. Phosphorylated at Thr-104, Ser-123, Ser-352 and Thr-397 by MAPK8/JNK1 and MAPK9/JNK2, which is required for the regulation of apoptosis by YAP1. In terms of processing, lactylation by AARS1 promotes nuclear localization and stabilization of YAP1, leading to increased Hippo signaling pathway. Delactylated by SIRT1. Ubiquitinated by SCF(beta-TRCP) E3 ubiquitin ligase. Isoforms lacking the transactivation domain seen in striatal neurons (at protein level). Ubiquitous. Isoform 2 is expressed at higher levels in the neural tissues. In the embryo, it is expressed in brain, eye, and the maxillary and frontonasal components of the primary palate.

The protein resides in the cytoplasm. It localises to the nucleus. The protein localises to the cell junction. Its subcellular location is the tight junction. It is found in the cell membrane. Its function is as follows. Transcriptional regulator with dual roles as a coactivator and corepressor. Critical downstream regulatory target in the Hippo signaling pathway, crucial for organ size control and tumor suppression by restricting proliferation and promoting apoptosis. The Hippo signaling pathway core involves a kinase cascade featuring STK3/MST2 and STK4/MST1, along with its regulatory partner SAV1, which phosphorylates and activates LATS1/2 in complex with their regulatory protein, MOB1. This activation leads to the phosphorylation and inactivation of the YAP1 oncoprotein and WWTR1/TAZ. Phosphorylation of YAP1 by LATS1/2 prevents its nuclear translocation, thereby regulating the expression of its target genes. The transcriptional regulation of gene expression requires TEAD transcription factors and modulates cell growth, anchorage-independent growth, and induction of epithelial-mesenchymal transition (EMT). Plays a key role in tissue tension and 3D tissue shape by regulating the cortical actomyosin network, acting via ARHGAP18, a Rho GTPase activating protein that suppresses F-actin polymerization. It also suppresses ciliogenesis by acting as a transcriptional corepressor of TEAD4 target genes AURKA and PLK1. In conjunction with WWTR1, regulates TGFB1-dependent SMAD2 and SMAD3 nuclear accumulation. Synergizes with WBP2 to enhance PGR activity. This Mus musculus (Mouse) protein is Transcriptional coactivator YAP1 (Yap1).